The following is a 696-amino-acid chain: Glycine--tRNA ligase beta subunit (696 aa).

It belongs to the class-II aminoacyl-tRNA synthetase family. Tetramer of two alpha and two beta subunits.

It is found in the cytoplasm. The enzyme catalyses tRNA(Gly) + glycine + ATP = glycyl-tRNA(Gly) + AMP + diphosphate. The polypeptide is Glycine--tRNA ligase beta subunit (Nitratidesulfovibrio vulgaris (strain DP4) (Desulfovibrio vulgaris)).